The primary structure comprises 105 residues: Serine protease inhibitor Kazal-type 6 (105 aa).

The first 23 residues, 1–23, serve as a signal peptide directing secretion; that stretch reads MKVAGVFLLLSLALLCFFSGAFS. Residue Q24 is modified to Pyrrolidone carboxylic acid. Positions 49-105 constitute a Kazal-like domain; it reads RLFQINCGEFRDPKVFCTRESDPLCGSDGQTYGNKCAFCKALEKSSGKINLKHRGKC. Cystine bridges form between C55–C87, C65–C84, and C73–C105.

In terms of tissue distribution, expressed in the upper epidermis and in skin appendages.

It is found in the secreted. In terms of biological role, serine protease inhibitor selective for kallikreins. Efficiently inhibits KLK5 and human KLK2, KLK4, KLK5, KLK6, KLK7, KLK12, KLK13 and KLK14. Doesn't inhibit human KLK1 and KLK8. The chain is Serine protease inhibitor Kazal-type 6 (Spink6) from Mus musculus (Mouse).